A 309-amino-acid polypeptide reads, in one-letter code: Mitochondrial brown fat uncoupling protein 1 (309 aa).

Residues 2 to 10 lie on the Mitochondrial intermembrane side of the membrane; that stretch reads VGHTESDVP. A helical membrane pass occupies residues 11-32; that stretch reads PTMAVKIFSAGVAACVADIITF. Solcar repeat units lie at residues 11–106, 113–203, and 212–297; these read PTMA…VQEF, ASLG…MKEA, and DDVP…LKQE. Topologically, residues 33 to 77 are mitochondrial matrix; the sequence is PLDTAKVRLQVGSAIQGECLISSAIRYKGVLGTIITLAKTEGPVK. A fatty acid 16:0-binding site is contributed by lysine 60. A helical transmembrane segment spans residues 78-100; sequence LYSGLPAGLQRQISFASLRIGLY. At 101–118 the chain is on the mitochondrial intermembrane side; the sequence is DTVQEFFTTGKEASLGSK. Residues 119–135 form a helical membrane-spanning segment; the sequence is ISAGLMTGGVAVFIGQP. Residues 136 to 180 lie on the Mitochondrial matrix side of the membrane; the sequence is TEVVKVRLQAQSHLHGPKPRYTGTYNAYRIIATTEGLTGLWKGTT. Residues 181–197 form a helical membrane-spanning segment; the sequence is PNLTRNVIINCTELVTY. Residues 198-214 are Mitochondrial intermembrane-facing; the sequence is DLMKEALVKNKLLADDV. The helical transmembrane segment at 215-234 threads the bilayer; the sequence is PCHFVSAVVAGFCTTVLSSP. Residues 235–268 are Mitochondrial matrix-facing; that stretch reads VDVVKTRFVNSSPGQYTSVPNCAMMMLTREGPSA. Cysteine sulfenic acid (-SOH) is present on cysteine 256. Residues 269-291 traverse the membrane as a helical segment; it reads FFKGFVPSFLRLGSWNIIMFVCF. Lysine 271 provides a ligand contact to fatty acid 16:0. The Mitochondrial intermembrane portion of the chain corresponds to 292 to 309; sequence EQLKQELMKSRHTMDCAT.

The protein belongs to the mitochondrial carrier (TC 2.A.29) family. As to quaternary structure, most probably functions as a monomer. Binds one purine nucleotide per monomer. However, has also been suggested to function as a homodimer or a homotetramer. Tightly associates with cardiolipin in the mitochondrion inner membrane; may stabilize and regulate its activity. May undergo sulfenylation upon cold exposure. May increase the sensitivity of UCP1 thermogenic function to the activation by noradrenaline probably through structural effects. In terms of processing, may undergo ubiquitin-mediated proteasomal degradation.

The protein localises to the mitochondrion inner membrane. The catalysed reaction is H(+)(in) = H(+)(out). Its activity is regulated as follows. Has no constitutive proton transporter activity and has to be activated by long-chain fatty acids/LCFAs. Inhibited by purine nucleotides. Both purine nucleotides and LCFAs bind the cytosolic side of the transporter and directly compete to activate or inhibit it. Activated by noradrenaline and reactive oxygen species. Despite lacking canonical translational encoding for selenocysteine, a small pool of the protein has been observed to selectively incorporate selenocysteine at 'Cys-256'. Selenocysteine-modified protein is highly sensitive to redox modification and may constitute a pool of protein highly sensitive to activation by elevated levels of reactive oxygen species (ROS). In terms of biological role, mitochondrial protein responsible for thermogenic respiration, a specialized capacity of brown adipose tissue and beige fat that participates in non-shivering adaptive thermogenesis to temperature and diet variations and more generally to the regulation of energy balance. Functions as a long-chain fatty acid/LCFA and proton symporter, simultaneously transporting one LCFA and one proton through the inner mitochondrial membrane. However, LCFAs remaining associated with the transporter via their hydrophobic tails, it results in an apparent transport of protons activated by LCFAs. Thereby, dissipates the mitochondrial proton gradient and converts the energy of substrate oxydation into heat instead of ATP. Regulates the production of reactive oxygen species/ROS by mitochondria. The polypeptide is Mitochondrial brown fat uncoupling protein 1 (Bos taurus (Bovine)).